The chain runs to 488 residues: UL37 immediate early glycoprotein (488 aa).

Positions 1–22 (MSPVYVNLLGSVGLLAFWYFSY) are cleaved as a signal peptide. The segment covering 83-107 (GEESVTEDTEREDTEEEREDEEEEN) has biased composition (acidic residues). Positions 83-119 (GEESVTEDTEREDTEEEREDEEEENEARTPEVNPMDA) are disordered. 15 N-linked (GlcNAc...) asparagine; by host glycosylation sites follow: N206, N210, N219, N223, N242, N275, N281, N294, N297, N306, N333, N337, N343, N384, and N391. The helical transmembrane segment at 439 to 459 (ICTVAAGSIALLSLFCILLIG) threads the bilayer.

The protein belongs to the immediate early glycoprotein family. In terms of assembly, interacts with host BAX. Interacts with host RSAD2/viperin; this interaction results in RSAD2/viperin relocalization from the endoplasmic reticulum to the mitochondria, actin cytoskeleton disruption and enhancement of infection. Interacts with host PEX19; this interaction inhibits the peroxisomal-dependent antiviral signaling. Interacts with host CHCHD6; this interaction rewires mitochondria by engaging the conserved MICOS complex.

Its subcellular location is the host membrane. The protein resides in the host endoplasmic reticulum membrane. The protein localises to the host Golgi apparatus membrane. It is found in the host mitochondrion membrane. It localises to the host peroxisome. In terms of biological role, multifunctional transmembrane protein that plays several key roles in viral replication. Rapidely traffics from the host endoplasmic reticulum to the outer mitochondrial membrane where it acts to inhibit host immune response, block apoptotic signaling, regulate calcium flux, and induce mitochondrial fragmentation. Sequesters proapoptotic BAX at the outer mitochondrial membrane and prevents cytochrome c release and subsequent initiation of the proapoptotic cascade. Also provoques a calcium efflux from host endoplasmic reticulum and F-actin cytoskeleton disruption. Participates in the increase of host mitochondrial biogenesis, thus promoting viral replication by efficient use of newly made mitochondria. Additionally, a subset of vMIA localizes to peroxisomes, causing fragmentation and blocking peroxisomal MAVS signaling. Mechanistically, inhibits host MAVS oligomerization at peroxisomes in a mitochondrial fission factors (MFF)-dependent manner and in mitochondria independently of mitochondrial fission factors. Plays an essential role in the trafficking of host viperin/RSAD2 from the endoplasmic reticulum to the viral assembly compartment via the mitochondria during viral infection as failure of viperin to localize to the mitochondria results in insufficient lipogenesis and thus reduces viral replication. May play a role in escape from the host antiviral response. This is UL37 immediate early glycoprotein (UL37) from Homo sapiens (Human).